The following is a 351-amino-acid chain: DNA integrity scanning protein DisA (351 aa).

The DAC domain occupies 4–142; that stretch reads RSGFWQVLQQ…GPMKYILRDF (139 aa). Residues Gly-71, Leu-89, and 102-106 contribute to the ATP site; that span reads TRHRT.

Belongs to the DisA family. In terms of assembly, homooctamer. Mg(2+) is required as a cofactor.

The enzyme catalyses 2 ATP = 3',3'-c-di-AMP + 2 diphosphate. Participates in a DNA-damage check-point that is active prior to asymmetric division when DNA is damaged. DisA forms globular foci that rapidly scan along the chromosomes during sporulation, searching for lesions. When a lesion is present, DisA pauses at the lesion site. This triggers a cellular response that culminates in a temporary block in sporulation initiation. In terms of biological role, also has diadenylate cyclase activity, catalyzing the condensation of 2 ATP molecules into cyclic di-AMP (c-di-AMP). c-di-AMP acts as a signaling molecule that couples DNA integrity with progression of sporulation. The rise in c-di-AMP level generated by DisA while scanning the chromosome, operates as a positive signal that advances sporulation; upon encountering a lesion, the DisA focus arrests at the damaged site and halts c-di-AMP synthesis. The protein is DNA integrity scanning protein DisA of Symbiobacterium thermophilum (strain DSM 24528 / JCM 14929 / IAM 14863 / T).